The following is a 409-amino-acid chain: Glucose-1-phosphate adenylyltransferase (409 aa).

Residues glycine 168, 183–184 (EK), and serine 201 contribute to the alpha-D-glucose 1-phosphate site.

It belongs to the bacterial/plant glucose-1-phosphate adenylyltransferase family. As to quaternary structure, homotetramer.

It catalyses the reaction alpha-D-glucose 1-phosphate + ATP + H(+) = ADP-alpha-D-glucose + diphosphate. Its pathway is glycan biosynthesis; glycogen biosynthesis. Functionally, involved in the biosynthesis of ADP-glucose, a building block required for the elongation reactions to produce glycogen. Catalyzes the reaction between ATP and alpha-D-glucose 1-phosphate (G1P) to produce pyrophosphate and ADP-Glc. The polypeptide is Glucose-1-phosphate adenylyltransferase (Corynebacterium efficiens (strain DSM 44549 / YS-314 / AJ 12310 / JCM 11189 / NBRC 100395)).